A 125-amino-acid polypeptide reads, in one-letter code: Phosphoribosyl-AMP cyclohydrolase (125 aa).

A Mg(2+)-binding site is contributed by D80. Residue C81 coordinates Zn(2+). Mg(2+)-binding residues include D82 and D84. C97 and C104 together coordinate Zn(2+).

The protein belongs to the PRA-CH family. In terms of assembly, homodimer. The cofactor is Mg(2+). Zn(2+) serves as cofactor.

Its subcellular location is the cytoplasm. The enzyme catalyses 1-(5-phospho-beta-D-ribosyl)-5'-AMP + H2O = 1-(5-phospho-beta-D-ribosyl)-5-[(5-phospho-beta-D-ribosylamino)methylideneamino]imidazole-4-carboxamide. The protein operates within amino-acid biosynthesis; L-histidine biosynthesis; L-histidine from 5-phospho-alpha-D-ribose 1-diphosphate: step 3/9. In terms of biological role, catalyzes the hydrolysis of the adenine ring of phosphoribosyl-AMP. This Leifsonia xyli subsp. xyli (strain CTCB07) protein is Phosphoribosyl-AMP cyclohydrolase.